The following is a 561-amino-acid chain: Putative transport protein YbjL (561 aa).

Transmembrane regions (helical) follow at residues 8–28 (LLNGNYILLLFVVLALGLCLG), 32–52 (LGSIQLGNSIGVLVVSLLLGQ), 66–86 (FMLFIFCVGVEAGPNFFSIFF), 94–114 (MLALVMVGSALLIALGLGKLF), and 158–178 (NLSLGYALTYLIGLVSLIVGA). 2 RCK C-terminal domains span residues 200–288 (RGLD…SFRN) and 292–373 (VFDR…RIGF). Helical transmembrane passes span 383–403 (LLAFCAFFIIGLMIGMITFQF), 406–426 (FSFGIGNAAGLLFAGIMLGFL), 447–467 (FGLMVFMAGVGLSAGSGISNG), 475–495 (MLIAGLVVSLAPVVICFLFGA), and 540–560 (AIANVLLTLAGTLIVIIWPGL).

This sequence belongs to the AAE transporter (TC 2.A.81) family. YbjL subfamily.

It is found in the cell membrane. This Salmonella arizonae (strain ATCC BAA-731 / CDC346-86 / RSK2980) protein is Putative transport protein YbjL.